The following is a 251-amino-acid chain: MQYQVDTHTHTVASTHAYSTIHDYLAVAKQKGIRLFATTDHGPAMADAPHFWHFVNLRVLPRMVDGVGILRGIEANIKNIDGEIDFFGDYLKQLDIVLAGFHEPVYPPSDKATHTEAMINTIKSGKVDIITHPGNPAYPIDIDAVARAAAEYGVALEINNSSFEVSRKGSEANCTAIAKAAKEFGTILVMGSDSHVAFSLGGFERALAIIDAAGYPKSQLLNRSPSVLLGFLAQRGHHTVADLQALFDEAV.

Residues His-8, His-10, His-16, His-41, Glu-74, His-102, His-132, Asp-193, and His-195 each contribute to the Zn(2+) site.

The protein belongs to the PHP family. Zn(2+) serves as cofactor.

In Shewanella sp. (strain W3-18-1), this protein is Probable phosphatase Sputw3181_2734.